Reading from the N-terminus, the 70-residue chain is UPF0337 protein BT9727_3385 (70 aa).

It belongs to the UPF0337 (CsbD) family.

This Bacillus thuringiensis subsp. konkukian (strain 97-27) protein is UPF0337 protein BT9727_3385.